A 184-amino-acid chain; its full sequence is ATP-dependent protease subunit HslV (184 aa).

Residue Thr12 is part of the active site. Gly167, Cys170, and Thr173 together coordinate Na(+).

Belongs to the peptidase T1B family. HslV subfamily. A double ring-shaped homohexamer of HslV is capped on each side by a ring-shaped HslU homohexamer. The assembly of the HslU/HslV complex is dependent on binding of ATP.

The protein localises to the cytoplasm. The catalysed reaction is ATP-dependent cleavage of peptide bonds with broad specificity.. With respect to regulation, allosterically activated by HslU binding. Its function is as follows. Protease subunit of a proteasome-like degradation complex believed to be a general protein degrading machinery. This chain is ATP-dependent protease subunit HslV, found in Wolbachia sp. subsp. Drosophila simulans (strain wRi).